Consider the following 777-residue polypeptide: Translation initiation factor IF-2 (777 aa).

Disordered stretches follow at residues 30 to 54 (SPSMGATIVKKRRRKTHDTEEQDEN) and 98 to 117 (EDSNEKTNDRDSATNTSFKE). Positions 98–109 (EDSNEKTNDRDS) are enriched in basic and acidic residues. One can recognise a tr-type G domain in the interval 279–449 (PKPPIVTFMG…LLIAELMKLE (171 aa)). The G1 stretch occupies residues 288-295 (GHVDHGKT). A GTP-binding site is contributed by 288–295 (GHVDHGKT). Residues 313–317 (GITQH) form a G2 region. Residues 334-337 (DTPG) form a G3 region. Residues 334-338 (DTPGH) and 388-391 (NKID) each bind GTP. A G4 region spans residues 388 to 391 (NKID). Residues 425–427 (SAK) form a G5 region.

Belongs to the TRAFAC class translation factor GTPase superfamily. Classic translation factor GTPase family. IF-2 subfamily.

The protein resides in the cytoplasm. Its function is as follows. One of the essential components for the initiation of protein synthesis. Protects formylmethionyl-tRNA from spontaneous hydrolysis and promotes its binding to the 30S ribosomal subunits. Also involved in the hydrolysis of GTP during the formation of the 70S ribosomal complex. The sequence is that of Translation initiation factor IF-2 from Wolbachia sp. subsp. Brugia malayi (strain TRS).